A 401-amino-acid chain; its full sequence is Steroid C26-monooxygenase (401 aa).

Cysteine 343 contacts heme.

The protein belongs to the cytochrome P450 family. Heme is required as a cofactor.

The enzyme catalyses cholest-4-en-3-one + 6 reduced [2Fe-2S]-[ferredoxin] + 3 O2 + 5 H(+) = (25R)-3-oxocholest-4-en-26-oate + 6 oxidized [2Fe-2S]-[ferredoxin] + 4 H2O. It participates in steroid metabolism; cholesterol degradation. In terms of biological role, involved in the utilization of cholesterol as the sole carbon and energy source by degrading the side chain. Primarily catalyzes the sequential oxidation of the terminal methyl of cholest-4-en-3-one into (25R)-26-hydroxycholest-4-en-3-one (alcohol), (25R)-26-oxocholest-4-en-3-one (aldehyde), to finally yield the carboxylic acid (25R)-3-oxocholest-4-en-26-oate. Also able to sequentially oxidize cholesterol itself, not only cholest-4-en-3-one. This chain is Steroid C26-monooxygenase, found in Mycolicibacterium smegmatis (strain ATCC 700084 / mc(2)155) (Mycobacterium smegmatis).